The chain runs to 229 residues: ATP-dependent Clp protease proteolytic subunit (229 aa).

Ser101 serves as the catalytic Nucleophile. The active site involves His126.

Belongs to the peptidase S14 family. As to quaternary structure, component of the chloroplastic Clp protease core complex.

It is found in the plastid. The protein localises to the chloroplast stroma. The catalysed reaction is Hydrolysis of proteins to small peptides in the presence of ATP and magnesium. alpha-casein is the usual test substrate. In the absence of ATP, only oligopeptides shorter than five residues are hydrolyzed (such as succinyl-Leu-Tyr-|-NHMec, and Leu-Tyr-Leu-|-Tyr-Trp, in which cleavage of the -Tyr-|-Leu- and -Tyr-|-Trp bonds also occurs).. Its function is as follows. Cleaves peptides in various proteins in a process that requires ATP hydrolysis. Has a chymotrypsin-like activity. Plays a major role in the degradation of misfolded proteins. In Mesostigma viride (Green alga), this protein is ATP-dependent Clp protease proteolytic subunit.